The following is a 252-amino-acid chain: MKFGIISIFPEMFKAINDFGVTARAIKDSKVSISCFNPRDYTTDRHATVDDTSFGGGAGMVMKYQPLSAAIEDAKNTLGCGTKVVYLSPQGSIFNHRKAQELLQNDSLILLCGRYEGVDERLIQDYVDEEISVGDFVLSGGELPAMLVMDSLIRLLPEVLGNKESVVEDSFYDGLLDYPHYTKPAVLPNGNAVPDVLLSGNHKEIAKWRRKQKLIRTYERRKDLIECLCLSAKDKQILDDYKIDKVSTKGEE.

S-adenosyl-L-methionine is bound by residues G113 and 133-138 (VGDFVL).

It belongs to the RNA methyltransferase TrmD family. Homodimer.

Its subcellular location is the cytoplasm. The enzyme catalyses guanosine(37) in tRNA + S-adenosyl-L-methionine = N(1)-methylguanosine(37) in tRNA + S-adenosyl-L-homocysteine + H(+). Functionally, specifically methylates guanosine-37 in various tRNAs. In Francisella tularensis subsp. holarctica (strain FTNF002-00 / FTA), this protein is tRNA (guanine-N(1)-)-methyltransferase.